The sequence spans 326 residues: Fructose operon regulatory protein (326 aa).

In terms of domain architecture, HTH lacI-type spans 1 to 58; that stretch reads MTLDEIAKLAGVSKTTASYVINGKAQKYRISEKTQHKVMAVVEQYNFRPDHAASALRA. Residues 3–22 constitute a DNA-binding region (H-T-H motif); the sequence is LDEIAKLAGVSKTTASYVIN.

As to quaternary structure, homodimer.

Interaction with F1P may induce a structural change in the DNA spacer region between the -35 and -10 elements, thereby facilitating RNAP binding to the promoter to trigger the transcriptional activation of the fru operon. Interaction with F1P does not release FruR from its binding sequence. Its function is as follows. Regulates the expression of the fruBKA (fru) operon, which encodes proteins involved in the import and metabolism of fructose. In the absence of fructose 1-phosphate (F1P), binds to the promoter region of fruB, interferes with the binding of the RNA polymerase (RNAP) to the promoter and represses the expression of the operon. In the presence of F1P, activates the transcription of the fru operon by facilitating the binding of RNAP to the promoter. Essential for the expression of the fru operon and thus for growth on fructose. The polypeptide is Fructose operon regulatory protein (Vibrio cholerae serotype O1 (strain ATCC 39315 / El Tor Inaba N16961)).